The primary structure comprises 208 residues: Effector protein MavE (208 aa).

The NPxY eukaryotic motif signature appears at 77–80; that stretch reads NPRY. Residues 184–204 traverse the membrane as a helical segment; sequence VLFPFVAATVAVAATAASVLF.

As to quaternary structure, homotrimer.

The protein localises to the secreted. Its subcellular location is the host vacuole. It localises to the host pathogen-containing vacuole. The protein resides in the host pathogen-containing vacuole membrane. Virulence effector that is indispensable for endoplasmic reticulum (ER)-mediated remodeling of the Legionella pneumophila-containing vacuole (LCV) and lysosomal evasion. Essential for intracellular replication in human monocyte-derived macrophages (hMDMs) and amoebae, as well as for intrapulmonary proliferation in mice. The chain is Effector protein MavE from Legionella pneumophila subsp. pneumophila (strain Philadelphia 1 / ATCC 33152 / DSM 7513).